We begin with the raw amino-acid sequence, 155 residues long: Endoribonuclease YbeY (155 aa).

The Zn(2+) site is built by histidine 110, histidine 114, and histidine 120.

This sequence belongs to the endoribonuclease YbeY family. Zn(2+) serves as cofactor.

The protein resides in the cytoplasm. Its function is as follows. Single strand-specific metallo-endoribonuclease involved in late-stage 70S ribosome quality control and in maturation of the 3' terminus of the 16S rRNA. This chain is Endoribonuclease YbeY, found in Deinococcus geothermalis (strain DSM 11300 / CIP 105573 / AG-3a).